A 66-amino-acid chain; its full sequence is Hemicalcin (66 aa).

An N-terminal signal peptide occupies residues 1 to 21 (MRASLFIVIFVVSFITISCLS). Positions 22-33 (TDDEEARWIEKR) are excised as a propeptide. 3 cysteine pairs are disulfide-bonded: Cys36–Cys50, Cys43–Cys54, and Cys49–Cys65. Positions 55 to 57 (KRR) are essential for stimulation of [3H]ryanodine binding to RYR1.

The protein belongs to the scorpion calcin family. Expressed by the venom gland.

Its subcellular location is the secreted. Its function is as follows. This toxin stabilizes ryanodine receptor 1 (RyR1) opening in a long-lasting subconductance state (20% and 38% of the full conductance state have been found). It promotes an increase in the opening probability at intermediate concentration. Furthermore, it triggers calcium release from sarcoplasmic vesicles (68 nM are enough to induce a sharp release, and 45% of the total calcium is released after toxin (100 nM) addition) probably by acting as a cell-penetrating peptide (CPP). In addition, it has been shown to dose-dependently stimulate ryanodine binding to RyR1 (EC(50)=6.9-71 nM). It also augments the bell-shaped calcium-[3H]ryanodine binding curve that is maximal at about 10 uM calcium concentration. It binds a different site as ryanodine. It acts synergistically with caffeine. In vivo, intracerebroventricular injection into mice induces neurotoxic symptoms, followed by death. The chain is Hemicalcin from Hemiscorpius lepturus (Scorpion).